We begin with the raw amino-acid sequence, 98 residues long: Minor capsid protein P13 (98 aa).

The segment at 3–23 is hydrophobic; sequence KITPFLIAAVVAVIVLAVWLF.

In terms of assembly, interacts with the major capsid protein.

Its subcellular location is the virion. Its function is as follows. One of the minor capsid proteins that constitute a network internal to the major capsid proteins and outside the lipid membrane. The minor capsid protein P13 does not serve a cross-linking function between neighboring capsomers, it may play a role in the viral capsid assembly. The sequence is that of Minor capsid protein P13 from Chlorella (PBCV-1).